Here is a 255-residue protein sequence, read N- to C-terminus: Pyridoxine 5'-phosphate synthase (255 aa).

2 residues coordinate 3-amino-2-oxopropyl phosphate: asparagine 8 and arginine 19. The Proton acceptor role is filled by histidine 44. 2 residues coordinate 1-deoxy-D-xylulose 5-phosphate: arginine 46 and histidine 51. Glutamate 74 serves as the catalytic Proton acceptor. Residue threonine 111 coordinates 1-deoxy-D-xylulose 5-phosphate. Residue histidine 202 is the Proton donor of the active site. 3-amino-2-oxopropyl phosphate-binding positions include aspartate 203 and 225 to 226; that span reads GH.

The protein belongs to the PNP synthase family. In terms of assembly, homooctamer; tetramer of dimers.

The protein resides in the cytoplasm. The catalysed reaction is 3-amino-2-oxopropyl phosphate + 1-deoxy-D-xylulose 5-phosphate = pyridoxine 5'-phosphate + phosphate + 2 H2O + H(+). The protein operates within cofactor biosynthesis; pyridoxine 5'-phosphate biosynthesis; pyridoxine 5'-phosphate from D-erythrose 4-phosphate: step 5/5. Functionally, catalyzes the complicated ring closure reaction between the two acyclic compounds 1-deoxy-D-xylulose-5-phosphate (DXP) and 3-amino-2-oxopropyl phosphate (1-amino-acetone-3-phosphate or AAP) to form pyridoxine 5'-phosphate (PNP) and inorganic phosphate. The polypeptide is Pyridoxine 5'-phosphate synthase (Xanthomonas axonopodis pv. citri (strain 306)).